The following is a 432-amino-acid chain: Glutamyl-tRNA reductase (432 aa).

Substrate contacts are provided by residues 50–53 (TCNR), S110, 115–117 (ETQ), and Q121. The active-site Nucleophile is the C51. NADP(+) is bound at residue 190 to 195 (GVGEMS).

This sequence belongs to the glutamyl-tRNA reductase family. As to quaternary structure, homodimer.

It carries out the reaction (S)-4-amino-5-oxopentanoate + tRNA(Glu) + NADP(+) = L-glutamyl-tRNA(Glu) + NADPH + H(+). It participates in porphyrin-containing compound metabolism; protoporphyrin-IX biosynthesis; 5-aminolevulinate from L-glutamyl-tRNA(Glu): step 1/2. In terms of biological role, catalyzes the NADPH-dependent reduction of glutamyl-tRNA(Glu) to glutamate 1-semialdehyde (GSA). The sequence is that of Glutamyl-tRNA reductase from Sulfurimonas denitrificans (strain ATCC 33889 / DSM 1251) (Thiomicrospira denitrificans (strain ATCC 33889 / DSM 1251)).